The sequence spans 304 residues: Acetyl-coenzyme A carboxylase carboxyl transferase subunit beta (304 aa).

Positions 23-292 (VWTKCDSCGQ…PNPEAPREGV (270 aa)) constitute a CoA carboxyltransferase N-terminal domain. Zn(2+) is bound by residues C27, C30, C46, and C49. A C4-type zinc finger spans residues 27–49 (CDSCGQVLYRAELERNLEVCPKC). The interval 284–304 (NPEAPREGVVVPPVPDQEPEA) is disordered. Positions 295–304 (PPVPDQEPEA) are enriched in pro residues.

It belongs to the AccD/PCCB family. In terms of assembly, acetyl-CoA carboxylase is a heterohexamer composed of biotin carboxyl carrier protein (AccB), biotin carboxylase (AccC) and two subunits each of ACCase subunit alpha (AccA) and ACCase subunit beta (AccD). Zn(2+) serves as cofactor.

Its subcellular location is the cytoplasm. The catalysed reaction is N(6)-carboxybiotinyl-L-lysyl-[protein] + acetyl-CoA = N(6)-biotinyl-L-lysyl-[protein] + malonyl-CoA. It participates in lipid metabolism; malonyl-CoA biosynthesis; malonyl-CoA from acetyl-CoA: step 1/1. Component of the acetyl coenzyme A carboxylase (ACC) complex. Biotin carboxylase (BC) catalyzes the carboxylation of biotin on its carrier protein (BCCP) and then the CO(2) group is transferred by the transcarboxylase to acetyl-CoA to form malonyl-CoA. The polypeptide is Acetyl-coenzyme A carboxylase carboxyl transferase subunit beta (Escherichia coli O6:K15:H31 (strain 536 / UPEC)).